The primary structure comprises 188 residues: Elongation factor P (188 aa).

It belongs to the elongation factor P family.

The protein localises to the cytoplasm. The protein operates within protein biosynthesis; polypeptide chain elongation. Functionally, involved in peptide bond synthesis. Stimulates efficient translation and peptide-bond synthesis on native or reconstituted 70S ribosomes in vitro. Probably functions indirectly by altering the affinity of the ribosome for aminoacyl-tRNA, thus increasing their reactivity as acceptors for peptidyl transferase. This is Elongation factor P from Phytoplasma mali (strain AT).